We begin with the raw amino-acid sequence, 205 residues long: Large ribosomal subunit protein uL3 (205 aa).

It belongs to the universal ribosomal protein uL3 family. Part of the 50S ribosomal subunit. Forms a cluster with proteins L14 and L19.

Its function is as follows. One of the primary rRNA binding proteins, it binds directly near the 3'-end of the 23S rRNA, where it nucleates assembly of the 50S subunit. This is Large ribosomal subunit protein uL3 from Porphyromonas gingivalis (strain ATCC 33277 / DSM 20709 / CIP 103683 / JCM 12257 / NCTC 11834 / 2561).